The primary structure comprises 365 residues: SWR1 complex subunit 2 (365 aa).

2 disordered regions span residues 43 to 83 (ALKE…NEKE) and 95 to 147 (PGKT…EGEK). A compositionally biased stretch (acidic residues) spans 48–74 (EHDDEYEAEREVADEFDSDFNDDEPEP). Positions 99-108 (ASKKKKKKTK) are enriched in basic residues. The segment covering 118 to 132 (GDEKPGEELGNKEQE) has biased composition (basic and acidic residues). Coiled coils occupy residues 123 to 150 (GEEL…KVIR) and 184 to 225 (GEEK…KAIV). Positions 133–144 (EKEENEAQEDME) are enriched in acidic residues. Positions 333-365 (RTKIPKSNKSFSLRSSARFLSSESEEESEEDSD) are disordered. Low complexity predominate over residues 342 to 354 (SFSLRSSARFLSS). Residues 355 to 365 (ESEEESEEDSD) show a composition bias toward acidic residues.

It belongs to the VPS72/YL1 family. Component of the SWR1 chromatin-remodeling complex composed of at least ARP6/ESD1/SUF3, PIE1, SWC6, SWC2 and H2AZs (HTA8, HTA9, HTA11). Interacts directly with SWC6 and H2AZs, but not with ARP6.

In terms of biological role, component of the SWR1 complex which mediates the ATP-dependent exchange of histone H2A for the H2A variant H2A.F/Z leading to transcriptional regulation of selected genes (e.g. FLC) by chromatin remodeling. This Arabidopsis thaliana (Mouse-ear cress) protein is SWR1 complex subunit 2 (SWC2).